The primary structure comprises 138 residues: Thyrotropin subunit beta (138 aa).

Positions 1–20 (MTAIFLMSMVFGLACGQTMS) are cleaved as a signal peptide. 6 disulfide bridges follow: cysteine 22/cysteine 72, cysteine 36/cysteine 87, cysteine 39/cysteine 125, cysteine 47/cysteine 103, cysteine 51/cysteine 105, and cysteine 108/cysteine 115. An N-linked (GlcNAc...) asparagine glycan is attached at asparagine 43. A propeptide spanning residues 133–138 (VVEFSI) is cleaved from the precursor.

This sequence belongs to the glycoprotein hormones subunit beta family. Heterodimer of a common alpha chain and a unique beta chain which confers biological specificity to thyrotropin, lutropin, follitropin and gonadotropin.

It localises to the secreted. Indispensable for the control of thyroid structure and metabolism. This Equus caballus (Horse) protein is Thyrotropin subunit beta (TSHB).